The primary structure comprises 424 residues: ATP-sensitive inward rectifier potassium channel 8 (424 aa).

Topologically, residues 1–69 (MLARKSIIPE…IFTTLVDLKW (69 aa)) are cytoplasmic. Ser-6 bears the Phosphoserine mark. A helical membrane pass occupies residues 70-94 (RHTLVIFTMSFLCSWLLFAIMWWLV). At 95-126 (AFAHGDIYAYMEKSGMEKSGLESTVCVTNVRS) the chain is on the extracellular side. The helical; Pore-forming intramembrane region spans 127–138 (FTSAFLFSIEVQ). The segment at residues 139-145 (VTIGFGG) is an intramembrane region (pore-forming). The short motif at 140-145 (TIGFGG) is the Selectivity filter element. The Extracellular segment spans residues 146-154 (RMMTEECPL). Residues 155-176 (AITVLILQNIVGLIINAVMLGC) form a helical membrane-spanning segment. Over 177–424 (IFMKTAQAHR…PEGNQNTSES (248 aa)) the chain is Cytoplasmic. Residues 375-424 (SHQNSLRKRNSMRRNNSMRRNNSIRRNNSSLMVPKVQFMTPEGNQNTSES) form a disordered region. Over residues 387–404 (RRNNSMRRNNSIRRNNSS) the composition is skewed to low complexity.

Belongs to the inward rectifier-type potassium channel (TC 1.A.2.1) family. KCNJ8 subfamily. As to quaternary structure, interacts with ABCC9. As to expression, predominantly detected in fetal and adult heart.

It localises to the membrane. The enzyme catalyses K(+)(in) = K(+)(out). In terms of biological role, inward rectifier potassium channels are characterized by a greater tendency to allow potassium to flow into the cell rather than out of it. Their voltage dependence is regulated by the concentration of extracellular potassium; as external potassium is raised, the voltage range of the channel opening shifts to more positive voltages. The inward rectification is mainly due to the blockage of outward current by internal magnesium. This channel is activated by internal ATP and can be blocked by external barium. Can form a sulfonylurea-sensitive but ATP-insensitive potassium channel with ABCC9. The polypeptide is ATP-sensitive inward rectifier potassium channel 8 (KCNJ8) (Homo sapiens (Human)).